The primary structure comprises 168 residues: Protein-export protein SecB (168 aa).

Residues 1–10 (MSDQGTNNGE) are compositionally biased toward polar residues. The tract at residues 1 to 22 (MSDQGTNNGESGNGGAQNGEAP) is disordered.

The protein belongs to the SecB family. As to quaternary structure, homotetramer, a dimer of dimers. One homotetramer interacts with 1 SecA dimer.

It localises to the cytoplasm. Functionally, one of the proteins required for the normal export of preproteins out of the cell cytoplasm. It is a molecular chaperone that binds to a subset of precursor proteins, maintaining them in a translocation-competent state. It also specifically binds to its receptor SecA. The protein is Protein-export protein SecB of Parvibaculum lavamentivorans (strain DS-1 / DSM 13023 / NCIMB 13966).